The primary structure comprises 189 residues: Apolipoprotein D (189 aa).

The N-terminal stretch at 1-20 is a signal peptide; the sequence is MVMLLLLLSALAGLFGAAEG. Position 21 is a pyrrolidone carboxylic acid (Gln-21). Intrachain disulfides connect Cys-28–Cys-134 and Cys-61–Cys-185. N-linked (GlcNAc...) asparagine glycans are attached at residues Asn-65 and Asn-98.

The protein belongs to the calycin superfamily. Lipocalin family. In terms of assembly, homodimer.

The protein localises to the secreted. Functionally, APOD occurs in the macromolecular complex with lecithin-cholesterol acyltransferase. It is probably involved in the transport and binding of bilin. Appears to be able to transport a variety of ligands in a number of different contexts. The chain is Apolipoprotein D (APOD) from Macaca fascicularis (Crab-eating macaque).